The primary structure comprises 58 residues: PI-actitoxin-Axm2a (58 aa).

One can recognise a BPTI/Kunitz inhibitor domain in the interval 7–57 (CLLPKKVGPCRAAVPRFYYNSDSGKCEGFTYGGCHANANNFKTKDECKNAC). 3 cysteine pairs are disulfide-bonded: Cys-7–Cys-57, Cys-16–Cys-40, and Cys-32–Cys-53.

It belongs to the venom Kunitz-type family. Sea anemone type 2 potassium channel toxin subfamily. As to expression, expressed by acrorhagi.

The protein localises to the secreted. It localises to the nematocyst. Serine protease inhibitor that is strongly active against trypsin (1900 IU/mg) and moderately active against plasmin. Also shows weak inhibition against chymotrypsin (70%), elastase (38%) and the metalloprotease thermolysin (14%). This is PI-actitoxin-Axm2a from Anthopleura aff. xanthogrammica (Sea anemone).